Here is a 1159-residue protein sequence, read N- to C-terminus: RAD51-associated protein 2 (1159 aa).

The interval 1–35 (MSLPQPTPRMAELRKPTSSLTPPEDPDSQPPSSKR) is disordered. The interval 1111-1159 (SHFPHGISRVRPLKTCSRPIRIGLSRKARIKQLHPYLKQMCYGNLKENF) is interaction with RAD51.

As to quaternary structure, interacts with RAD51. In terms of tissue distribution, specifically expressed in meiotic tissues. Highly expressed in testis.

The chain is RAD51-associated protein 2 (RAD51AP2) from Homo sapiens (Human).